We begin with the raw amino-acid sequence, 800 residues long: Metabotropic glutamate receptor-like protein C (800 aa).

Positions 1 to 21 (MKMKIIFLILILIFSINIIKC) are cleaved as a signal peptide. The Extracellular portion of the chain corresponds to 22 to 392 (DKEFKMLTLL…EVEFSQSLQY (371 aa)). N-linked (GlcNAc...) asparagine glycosylation is found at Asn69, Asn107, Asn166, Asn258, Asn276, Asn302, and Asn345. The helical transmembrane segment at 393–413 (GFSITTGVLIAITIIMMLGIV) threads the bilayer. Residues 414-426 (RYKSTPSIRSASP) lie on the Cytoplasmic side of the membrane. Residues 427–447 (IFLNFILAGGIIVYIGIIVWV) form a helical membrane-spanning segment. The Extracellular portion of the chain corresponds to 448–463 (GPANDHQCNARLWLVT). Residues 464–484 (LGFSTLIGSLVVKNFRIWLIF) form a helical membrane-spanning segment. Residues 485-499 (DNPELKSISITNYQL) are Cytoplasmic-facing. The helical transmembrane segment at 500–520 (FPWVGACLVINIILMSILTSV) threads the bilayer. Topologically, residues 521 to 551 (GDLREIDAQGIDSLGKYEFMKVCKMNSSGAS) are extracellular. N-linked (GlcNAc...) asparagine glycosylation is present at Asn546. A helical membrane pass occupies residues 552 to 572 (TLYTILAYFAALLLVGVFVSW). Residues 573–586 (KIRIVDIQEFNESK) are Cytoplasmic-facing. A helical transmembrane segment spans residues 587-607 (AIANTLYAISFCLFVIVPLMI). The Extracellular portion of the chain corresponds to 608 to 616 (SPQDKQSET). The helical transmembrane segment at 617-637 (IVLCTAGLFITTAALLIIFTP) threads the bilayer. Residues 638-800 (KFWRVFTLGD…NDTEEEDKNQ (163 aa)) lie on the Cytoplasmic side of the membrane. Disordered regions lie at residues 658 to 694 (QSNV…TETS) and 718 to 800 (EFDD…DKNQ). The span at 718–732 (EFDDNNIEQDNDNDN) shows a compositional bias: acidic residues. The span at 733–774 (DNNNNNNNNNNNNNNNNNNNNNNNNNNNNNNNNNNNNNNNNN) shows a compositional bias: low complexity. The segment covering 781-791 (NDEKVEEKQQN) has biased composition (basic and acidic residues).

This sequence in the N-terminal section; belongs to the BMP lipoprotein family. In the C-terminal section; belongs to the G-protein coupled receptor 3 family. GABA-B receptor subfamily.

It localises to the membrane. This is Metabotropic glutamate receptor-like protein C (grlC) from Dictyostelium discoideum (Social amoeba).